A 179-amino-acid chain; its full sequence is Peptidyl-tRNA hydrolase (179 aa).

Tyr15 is a binding site for tRNA. Catalysis depends on His20, which acts as the Proton acceptor. TRNA contacts are provided by Tyr66, Asn68, and Asn114.

Belongs to the PTH family. Monomer.

It is found in the cytoplasm. It catalyses the reaction an N-acyl-L-alpha-aminoacyl-tRNA + H2O = an N-acyl-L-amino acid + a tRNA + H(+). Functionally, hydrolyzes ribosome-free peptidyl-tRNAs (with 1 or more amino acids incorporated), which drop off the ribosome during protein synthesis, or as a result of ribosome stalling. Its function is as follows. Catalyzes the release of premature peptidyl moieties from peptidyl-tRNA molecules trapped in stalled 50S ribosomal subunits, and thus maintains levels of free tRNAs and 50S ribosomes. The chain is Peptidyl-tRNA hydrolase from Chlamydia trachomatis serovar L2b (strain UCH-1/proctitis).